Here is a 412-residue protein sequence, read N- to C-terminus: Tryptophan synthase beta chain (412 aa).

Residue Lys92 is modified to N6-(pyridoxal phosphate)lysine.

Belongs to the TrpB family. Tetramer of two alpha and two beta chains. The cofactor is pyridoxal 5'-phosphate.

It carries out the reaction (1S,2R)-1-C-(indol-3-yl)glycerol 3-phosphate + L-serine = D-glyceraldehyde 3-phosphate + L-tryptophan + H2O. It functions in the pathway amino-acid biosynthesis; L-tryptophan biosynthesis; L-tryptophan from chorismate: step 5/5. The beta subunit is responsible for the synthesis of L-tryptophan from indole and L-serine. This chain is Tryptophan synthase beta chain, found in Methylibium petroleiphilum (strain ATCC BAA-1232 / LMG 22953 / PM1).